Here is a 348-residue protein sequence, read N- to C-terminus: Glycerol-1-phosphate dehydrogenase [NAD(P)+] (348 aa).

NAD(+) contacts are provided by residues 94–98 (GKVID) and Thr116. Substrate is bound at residue Asp121. Residue Ser125 coordinates NAD(+). A substrate-binding site is contributed by Asp168. Zn(2+) is bound by residues Asp168 and His248. His252 contacts substrate. His264 contacts Zn(2+).

This sequence belongs to the glycerol-1-phosphate dehydrogenase family. In terms of assembly, homooctamer. Zn(2+) serves as cofactor.

It is found in the cytoplasm. The enzyme catalyses sn-glycerol 1-phosphate + NAD(+) = dihydroxyacetone phosphate + NADH + H(+). The catalysed reaction is sn-glycerol 1-phosphate + NADP(+) = dihydroxyacetone phosphate + NADPH + H(+). The protein operates within membrane lipid metabolism; glycerophospholipid metabolism. In terms of biological role, catalyzes the NAD(P)H-dependent reduction of dihydroxyacetonephosphate (DHAP or glycerone phosphate) to glycerol 1-phosphate (G1P). The G1P thus generated is used as the glycerophosphate backbone of phospholipids in the cellular membranes of Archaea. This Methanosphaera stadtmanae (strain ATCC 43021 / DSM 3091 / JCM 11832 / MCB-3) protein is Glycerol-1-phosphate dehydrogenase [NAD(P)+].